A 578-amino-acid polypeptide reads, in one-letter code: Solute carrier family 15 member 3 (578 aa).

The segment covering 1–15 (MSAPRAEEQPSRSGE) has biased composition (basic and acidic residues). Residues 1 to 27 (MSAPRAEEQPSRSGERQPLVARGPRGP) form a disordered region. Helical transmembrane passes span 33 to 53 (TAAA…FGVT), 77 to 97 (LLFL…ADVY), 102 to 122 (LTIS…LTTI), 155 to 175 (PYCA…ASSV), and 201 to 221 (WFYW…AFIE). Residue Asn-223 is glycosylated (N-linked (GlcNAc...) asparagine). A helical transmembrane segment spans residues 232–252 (IIVGLVGLAFFIFLFATPVFI). The segment at 280 to 301 (SRDSESAHLLPDQRSNQPGPSP) is disordered. A helical membrane pass occupies residues 308 to 328 (FQVLVKILPVMVTLVPYWMVY). Asn-353 is a glycosylation site (N-linked (GlcNAc...) asparagine). 2 helical membrane passes run 367–387 (IPEA…IPVK) and 405–425 (LQKM…AGVL). Asn-436 is a glycosylation site (N-linked (GlcNAc...) asparagine). The next 3 helical transmembrane spans lie at 462–481 (YLLI…EFAY), 494–514 (GIFF…VALL), and 538–558 (YFFL…WIAG).

This sequence belongs to the major facilitator superfamily. Proton-dependent oligopeptide transporter (POT/PTR) (TC 2.A.17) family. Expressed highly in bone marrow derived macrophages, and weakly in spleen and lung. Expressed in plasmacytoid dendritic cells (pDCs) in response to toll-like receptors (TLR) stimulation.

The protein resides in the lysosome membrane. Its subcellular location is the endosome membrane. The enzyme catalyses N-acetyl-D-muramoyl-L-alanyl-D-isoglutamine(out) + n H(+)(out) = N-acetyl-D-muramoyl-L-alanyl-D-isoglutamine(in) + n H(+)(in). It carries out the reaction glycylglycylglycine(out) + n H(+)(out) = glycylglycylglycine(in) + n H(+)(in). It catalyses the reaction carnosine(out) + n H(+)(out) = carnosine(in) + n H(+)(in). The catalysed reaction is L-histidine(out) + n H(+)(out) = L-histidine(in) + n H(+)(in). Functionally, proton-coupled amino-acid transporter that transports free histidine and certain di- and tripeptides, and is involved in innate immune response. Also able to transport carnosine. Involved in the detection of microbial pathogens by toll-like receptors (TLRs) and NOD-like receptors (NLRs), probably by mediating transport of bacterial peptidoglycans across the endolysosomal membrane: catalyzes the transport of certain bacterial peptidoglycans, such as muramyl dipeptide (MDP), the NOD2 ligand. This chain is Solute carrier family 15 member 3, found in Mus musculus (Mouse).